The following is a 325-amino-acid chain: Clavaminate synthase 2 (325 aa).

Positions 145, 147, and 280 each coordinate Fe cation. Residue Arg294 coordinates 2-oxoglutarate.

Belongs to the clavaminate synthase family. The cofactor is Fe(2+).

It catalyses the reaction deoxyamidinoproclavaminate + 2-oxoglutarate + O2 = amidinoproclavaminate + succinate + CO2. The catalysed reaction is proclavaminate + 2-oxoglutarate + O2 = dihydroclavaminate + succinate + CO2 + H2O. It carries out the reaction dihydroclavaminate + 2-oxoglutarate + O2 = clavaminate + succinate + CO2 + H2O. It functions in the pathway antibiotic biosynthesis; clavulanate biosynthesis; clavulanate from D-glyceraldehyde 3-phosphate and L-arginine: step 3/8. Its pathway is antibiotic biosynthesis; clavulanate biosynthesis; clavulanate from D-glyceraldehyde 3-phosphate and L-arginine: step 5/8. The protein operates within antibiotic biosynthesis; clavulanate biosynthesis; clavulanate from D-glyceraldehyde 3-phosphate and L-arginine: step 6/8. This chain is Clavaminate synthase 2 (cs2), found in Streptomyces clavuligerus.